Consider the following 165-residue polypeptide: Coatomer subunit zeta (165 aa).

The protein belongs to the adaptor complexes small subunit family. Oligomeric complex that consists of at least the alpha, beta, beta', gamma, delta, epsilon and zeta subunits.

The protein localises to the cytoplasm. It localises to the golgi apparatus membrane. Its subcellular location is the cytoplasmic vesicle. The protein resides in the COPI-coated vesicle membrane. In terms of biological role, the coatomer is a cytosolic protein complex that binds to dilysine motifs and reversibly associates with Golgi non-clathrin-coated vesicles, which further mediate biosynthetic protein transport from the ER, via the Golgi up to the trans Golgi network. Coatomer complex is required for budding from Golgi membranes, and is essential for the retrograde Golgi-to-ER transport of dilysine-tagged proteins. The zeta subunit may be involved in regulating the coat assembly and, hence, the rate of biosynthetic protein transport due to its association-dissociation properties with the coatomer complex. The sequence is that of Coatomer subunit zeta from Encephalitozoon cuniculi (strain GB-M1) (Microsporidian parasite).